A 395-amino-acid polypeptide reads, in one-letter code: tRNA (guanine-N(7)-)-methyltransferase (395 aa).

S-adenosyl-L-methionine-binding residues include Glu126, Glu151, and Asp178. Residues Lys204 and Asp234 each coordinate substrate.

The protein belongs to the class I-like SAM-binding methyltransferase superfamily. TrmB family.

It catalyses the reaction guanosine(46) in tRNA + S-adenosyl-L-methionine = N(7)-methylguanosine(46) in tRNA + S-adenosyl-L-homocysteine. It functions in the pathway tRNA modification; N(7)-methylguanine-tRNA biosynthesis. Catalyzes the formation of N(7)-methylguanine at position 46 (m7G46) in tRNA. The polypeptide is tRNA (guanine-N(7)-)-methyltransferase (Campylobacter fetus subsp. fetus (strain 82-40)).